A 737-amino-acid polypeptide reads, in one-letter code: Polyribonucleotide nucleotidyltransferase (737 aa).

Mg(2+) is bound by residues D489 and D495. In terms of domain architecture, KH spans 556-615 (PKIDTIKIDVDKIKIVIGKGGETIDKIIAETGVKIDIDEEGNVSIYSSDQDAINRAKEII). The S1 motif domain occupies 625 to 693 (DEVYRAKVVR…EKGRIDASMK (69 aa)). Positions 691–737 (SMKALLPRPPKPEHDEKGEKSERPHRPRHQKDYKPKKEFTETPKDSE) are disordered. Basic and acidic residues predominate over residues 700-737 (PKPEHDEKGEKSERPHRPRHQKDYKPKKEFTETPKDSE).

It belongs to the polyribonucleotide nucleotidyltransferase family. Requires Mg(2+) as cofactor.

It localises to the cytoplasm. The catalysed reaction is RNA(n+1) + phosphate = RNA(n) + a ribonucleoside 5'-diphosphate. Its function is as follows. Involved in mRNA degradation. Catalyzes the phosphorolysis of single-stranded polyribonucleotides processively in the 3'- to 5'-direction. This Streptococcus pneumoniae serotype 2 (strain D39 / NCTC 7466) protein is Polyribonucleotide nucleotidyltransferase.